A 258-amino-acid polypeptide reads, in one-letter code: Snake venom serine protease KN13 (258 aa).

The first 18 residues, M1–A18, serve as a signal peptide directing secretion. Positions Q19–L24 are excised as a propeptide. The Peptidase S1 domain maps to V25–A249. Disulfide bonds link C31/C163, C50/C66, C98/C256, C142/C210, C174/C189, and C200/C225. H65 functions as the Charge relay system in the catalytic mechanism. N-linked (GlcNAc...) asparagine glycosylation is present at N103. D110 serves as the catalytic Charge relay system. 4 N-linked (GlcNAc...) asparagine glycosylation sites follow: N121, N122, N154, and N170. S204 functions as the Charge relay system in the catalytic mechanism. An N-linked (GlcNAc...) asparagine glycan is attached at N251.

Belongs to the peptidase S1 family. Snake venom subfamily. In terms of assembly, monomer. In terms of tissue distribution, expressed by the venom gland.

Its subcellular location is the secreted. Snake venom serine protease that may act in the hemostasis system of the prey. In Trimeresurus stejnegeri (Chinese green tree viper), this protein is Snake venom serine protease KN13.